A 295-amino-acid polypeptide reads, in one-letter code: Glycine--tRNA ligase alpha subunit (295 aa).

This sequence belongs to the class-II aminoacyl-tRNA synthetase family. Tetramer of two alpha and two beta subunits.

Its subcellular location is the cytoplasm. The enzyme catalyses tRNA(Gly) + glycine + ATP = glycyl-tRNA(Gly) + AMP + diphosphate. This chain is Glycine--tRNA ligase alpha subunit, found in Bacillus licheniformis (strain ATCC 14580 / DSM 13 / JCM 2505 / CCUG 7422 / NBRC 12200 / NCIMB 9375 / NCTC 10341 / NRRL NRS-1264 / Gibson 46).